The primary structure comprises 317 residues: Type II methyltransferase M.MgeORF184P (317 aa).

It belongs to the N(4)/N(6)-methyltransferase family.

The catalysed reaction is a 2'-deoxyadenosine in DNA + S-adenosyl-L-methionine = an N(6)-methyl-2'-deoxyadenosine in DNA + S-adenosyl-L-homocysteine + H(+). Its function is as follows. Probably recognizes the double-stranded sequence 5'-CTAT-3' and methylates A-3 on only one strand; as the bacterial DNA is methylated on this sequence and this is the only type II methylase in the genome, it is probably responsible for all of the methylation on this site in the genome. In Mycoplasma genitalium (strain ATCC 33530 / DSM 19775 / NCTC 10195 / G37) (Mycoplasmoides genitalium), this protein is Type II methyltransferase M.MgeORF184P.